The chain runs to 133 residues: DNA-directed RNA polymerases I, II, and III subunit rpabc2 (133 aa).

A compositionally biased stretch (acidic residues) spans 1–32 (MADFEGGGDDGGYEEFDEGGGFEEEYVEETET). The segment at 1–55 (MADFEGGGDDGGYEEFDEGGGFEEEYVEETETTEAYTDIIDPSADANTAEAGRIP) is disordered.

It belongs to the archaeal Rpo6/eukaryotic RPB6 RNA polymerase subunit family. As to quaternary structure, component of the RNA polymerase I (Pol I), RNA polymerase II (Pol II) and RNA polymerase III (Pol III) complexes consisting of at least 13, 12 and 17 subunits, respectively.

The protein localises to the nucleus. In terms of biological role, DNA-dependent RNA polymerases catalyze the transcription of DNA into RNA using the four ribonucleoside triphosphates as substrates. Common component of RNA polymerases I, II and III which synthesize ribosomal RNA precursors, mRNA precursors and many functional non-coding RNAs, and small RNAs, such as 5S rRNA and tRNAs, respectively. Pol II is the central component of the basal RNA polymerase II transcription machinery. Pols are composed of mobile elements that move relative to each other. In Pol II, RPB6 is part of the clamp element and together with parts of RPB1 and RPB2 forms a pocket to which the RPB4-RPB7 subcomplex binds. The sequence is that of DNA-directed RNA polymerases I, II, and III subunit rpabc2 (polr2f) from Dictyostelium discoideum (Social amoeba).